The chain runs to 359 residues: 4-hydroxy-3-methylbut-2-en-1-yl diphosphate synthase (flavodoxin) (359 aa).

[4Fe-4S] cluster-binding residues include Cys264, Cys267, Cys299, and Glu306.

This sequence belongs to the IspG family. [4Fe-4S] cluster is required as a cofactor.

The enzyme catalyses (2E)-4-hydroxy-3-methylbut-2-enyl diphosphate + oxidized [flavodoxin] + H2O + 2 H(+) = 2-C-methyl-D-erythritol 2,4-cyclic diphosphate + reduced [flavodoxin]. It participates in isoprenoid biosynthesis; isopentenyl diphosphate biosynthesis via DXP pathway; isopentenyl diphosphate from 1-deoxy-D-xylulose 5-phosphate: step 5/6. Functionally, converts 2C-methyl-D-erythritol 2,4-cyclodiphosphate (ME-2,4cPP) into 1-hydroxy-2-methyl-2-(E)-butenyl 4-diphosphate. This is 4-hydroxy-3-methylbut-2-en-1-yl diphosphate synthase (flavodoxin) from Helicobacter pylori (strain J99 / ATCC 700824) (Campylobacter pylori J99).